The chain runs to 244 residues: Cobalt transport protein CbiM (244 aa).

An N-terminal signal peptide occupies residues 1 to 27 (MVEGMLKTNFRLLFLLIFLLIPTPVLA). Transmembrane regions (helical) follow at residues 36 to 56 (PVKW…VGFI), 65 to 85 (GPGA…LSAL), 102 to 122 (LAAI…VLIF), 134 to 154 (TLGA…YGVY), 168 to 188 (IFLA…VQLA), and 196 to 216 (LFLS…PLAI).

This sequence belongs to the CbiM family. Forms an energy-coupling factor (ECF) transporter complex composed of an ATP-binding protein (A component, CbiO), a transmembrane protein (T component, CbiQ) and 2 possible substrate-capture proteins (S components, CbiM and CbiN) of unknown stoichimetry.

Its subcellular location is the cell membrane. It functions in the pathway cofactor biosynthesis; adenosylcobalamin biosynthesis. Functionally, part of the energy-coupling factor (ECF) transporter complex CbiMNOQ involved in cobalt import. The chain is Cobalt transport protein CbiM from Carboxydothermus hydrogenoformans (strain ATCC BAA-161 / DSM 6008 / Z-2901).